Reading from the N-terminus, the 108-residue chain is MIPGEIRVNQALGDIELNAGRETKIIQVANHGDRPVQVGSHYHVYEVNEALKFEREETLGFRLNIPAGMAVRFEPGQCRTVELVAFDGKREIYGFHGKVMGKLESENK.

It belongs to the urease beta subunit family. In terms of assembly, heterotrimer of UreA (gamma), UreB (beta) and UreC (alpha) subunits. Three heterotrimers associate to form the active enzyme.

The protein resides in the cytoplasm. It catalyses the reaction urea + 2 H2O + H(+) = hydrogencarbonate + 2 NH4(+). It functions in the pathway nitrogen metabolism; urea degradation; CO(2) and NH(3) from urea (urease route): step 1/1. The protein is Urease subunit beta of Proteus hauseri.